The primary structure comprises 354 residues: 3-dehydroquinate synthase (354 aa).

NAD(+) is bound by residues 100–104 (GATGD), 124–125 (TT), lysine 136, lysine 145, and 163–166 (FLAT). Zn(2+) contacts are provided by glutamate 178, histidine 242, and histidine 256.

This sequence belongs to the sugar phosphate cyclases superfamily. Dehydroquinate synthase family. It depends on Co(2+) as a cofactor. The cofactor is Zn(2+). NAD(+) is required as a cofactor.

Its subcellular location is the cytoplasm. The catalysed reaction is 7-phospho-2-dehydro-3-deoxy-D-arabino-heptonate = 3-dehydroquinate + phosphate. It participates in metabolic intermediate biosynthesis; chorismate biosynthesis; chorismate from D-erythrose 4-phosphate and phosphoenolpyruvate: step 2/7. Catalyzes the conversion of 3-deoxy-D-arabino-heptulosonate 7-phosphate (DAHP) to dehydroquinate (DHQ). The sequence is that of 3-dehydroquinate synthase from Staphylococcus haemolyticus (strain JCSC1435).